The sequence spans 328 residues: Lipoyl synthase (328 aa).

[4Fe-4S] cluster is bound by residues C57, C62, C68, C83, C87, C90, and S298. The Radical SAM core domain maps to 69–287; that stretch reads WSRGTATFML…REEGLSLGFL (219 aa).

Belongs to the radical SAM superfamily. Lipoyl synthase family. [4Fe-4S] cluster serves as cofactor.

It is found in the cytoplasm. It carries out the reaction [[Fe-S] cluster scaffold protein carrying a second [4Fe-4S](2+) cluster] + N(6)-octanoyl-L-lysyl-[protein] + 2 oxidized [2Fe-2S]-[ferredoxin] + 2 S-adenosyl-L-methionine + 4 H(+) = [[Fe-S] cluster scaffold protein] + N(6)-[(R)-dihydrolipoyl]-L-lysyl-[protein] + 4 Fe(3+) + 2 hydrogen sulfide + 2 5'-deoxyadenosine + 2 L-methionine + 2 reduced [2Fe-2S]-[ferredoxin]. Its pathway is protein modification; protein lipoylation via endogenous pathway; protein N(6)-(lipoyl)lysine from octanoyl-[acyl-carrier-protein]: step 2/2. Catalyzes the radical-mediated insertion of two sulfur atoms into the C-6 and C-8 positions of the octanoyl moiety bound to the lipoyl domains of lipoate-dependent enzymes, thereby converting the octanoylated domains into lipoylated derivatives. The sequence is that of Lipoyl synthase from Deinococcus geothermalis (strain DSM 11300 / CIP 105573 / AG-3a).